The primary structure comprises 135 residues: Transcriptional activator protein (135 aa).

The Nuclear localization signal signature appears at 17–32; it reads KIQHHIAKKRQVRRRR. A zinc finger spans residues 37-54; sequence CGCSYYIHLDCINHGFTH. The tract at residues 120–135 is transactivation; it reads HLDDLTVSDWSFFKSL.

The protein belongs to the geminiviridae transcriptional activator protein family. Monomer. Homodimer. Homooligomer. Self-interaction correlates with nuclear localization and efficient activation of transcription. Monomers suppress local silencing by interacting with and inactivating host adenosine kinase 2 (ADK2) in the cytoplasm. Interacts with and inhibits host SNF1 kinase. Binds to ssDNA. Post-translationally, phosphorylated.

It is found in the host nucleus. The protein resides in the host cytoplasm. In terms of biological role, strong activator of the late viral genes promoters. Acts as a suppressor of RNA-mediated gene silencing, also known as post-transcriptional gene silencing (PTGS), a mechanism of plant viral defense that limits the accumulation of viral RNAs. TrAP suppresses the host RNA silencing by inhibiting adenosine kinase 2 (ADK2), a kinase involved in a general methylation pathway. Also suppresses the host basal defense by interacting with and inhibiting SNF1 kinase, a key regulator of cell metabolism implicated in innate antiviral defense. Determines pathogenicity. The sequence is that of Transcriptional activator protein from Tomato yellow leaf curl Sardinia virus (isolate Spain-2) (TYLCSV).